Here is a 472-residue protein sequence, read N- to C-terminus: POU domain, class 5, transcription factor 1 (472 aa).

Disordered stretches follow at residues 127-154 (MPSE…YHLT) and 187-255 (ISQA…LTTE). A compositionally biased stretch (polar residues) spans 220–234 (TAQNIPSAQAQSAPR). Residues 235-245 (SSGSSSGGCSN) show a composition bias toward low complexity. A compositionally biased stretch (acidic residues) spans 246–255 (SEEEETLTTE). A POU-specific domain is found at 249 to 323 (EETLTTEDLE…LLQRWLNEAE (75 aa)). Residues 343–402 (KRKRRTSLEGTVRSALESYFVKCPKPNTLEITHISDDLGLERDVVRVWFCNRRQKGKRLA) constitute a DNA-binding region (homeobox).

Belongs to the POU transcription factor family. Class-7 subfamily.

Its subcellular location is the nucleus. Functionally, involved in early development of embryos, especially in the process of gastrulation. May play an important role in establishing and specifying rhombomeric segments. Seems to be required to maintain the cells in a highly undifferentiated state. In contrast to POU2, T-POU2 lacks DNA-binding activity because of its incomplete pou domain structure. Overexpression of POU2 does not have any effect on development, whereas overexpression of t-POU2 causes developmental retardation or arrest before gastrulation. The protein is POU domain, class 5, transcription factor 1 (pou5f1) of Danio rerio (Zebrafish).